Reading from the N-terminus, the 309-residue chain is HPr kinase/phosphorylase (309 aa).

Residues H138 and K159 contribute to the active site. 153–160 is a binding site for ATP; it reads GASGIGKS. S160 contributes to the Mg(2+) binding site. Catalysis depends on D177, which acts as the Proton acceptor; for phosphorylation activity. Proton donor; for dephosphorylation activity. The interval 201–210 is important for the catalytic mechanism of both phosphorylation and dephosphorylation; the sequence is IEIRGVGIID. Position 202 (E202) interacts with Mg(2+). R243 is an active-site residue. An important for the catalytic mechanism of dephosphorylation region spans residues 264–269; sequence PVKTGR.

Belongs to the HPrK/P family. As to quaternary structure, homohexamer. The cofactor is Mg(2+).

The catalysed reaction is [HPr protein]-L-serine + ATP = [HPr protein]-O-phospho-L-serine + ADP + H(+). It carries out the reaction [HPr protein]-O-phospho-L-serine + phosphate + H(+) = [HPr protein]-L-serine + diphosphate. Catalyzes the ATP- as well as the pyrophosphate-dependent phosphorylation of a specific serine residue in HPr, a phosphocarrier protein of the phosphoenolpyruvate-dependent sugar phosphotransferase system (PTS). HprK/P also catalyzes the pyrophosphate-producing, inorganic phosphate-dependent dephosphorylation (phosphorolysis) of seryl-phosphorylated HPr (P-Ser-HPr). The two antagonistic activities of HprK/P are regulated by several intracellular metabolites, which change their concentration in response to the absence or presence of rapidly metabolisable carbon sources (glucose, fructose, etc.) in the growth medium. Therefore, by controlling the phosphorylation state of HPr, HPrK/P is a sensor enzyme that plays a major role in the regulation of carbon metabolism and sugar transport: it mediates carbon catabolite repression (CCR), and regulates PTS-catalyzed carbohydrate uptake and inducer exclusion. This chain is HPr kinase/phosphorylase, found in Lactococcus lactis subsp. lactis (strain IL1403) (Streptococcus lactis).